A 357-amino-acid polypeptide reads, in one-letter code: Elongation factor Ts (357 aa).

The segment at 82 to 85 (TDFV) is involved in Mg(2+) ion dislocation from EF-Tu.

This sequence belongs to the EF-Ts family.

The protein resides in the cytoplasm. Associates with the EF-Tu.GDP complex and induces the exchange of GDP to GTP. It remains bound to the aminoacyl-tRNA.EF-Tu.GTP complex up to the GTP hydrolysis stage on the ribosome. This Campylobacter jejuni (strain RM1221) protein is Elongation factor Ts.